A 175-amino-acid polypeptide reads, in one-letter code: RNA pyrophosphohydrolase (175 aa).

A Nudix hydrolase domain is found at 6–149; the sequence is GYRPNVGIVI…KRDVYRRVMK (144 aa). A Nudix box motif is present at residues 38 to 59; the sequence is GGINPGETAEQAMYRELFEEVG.

Belongs to the Nudix hydrolase family. RppH subfamily. Requires a divalent metal cation as cofactor.

In terms of biological role, accelerates the degradation of transcripts by removing pyrophosphate from the 5'-end of triphosphorylated RNA, leading to a more labile monophosphorylated state that can stimulate subsequent ribonuclease cleavage. The polypeptide is RNA pyrophosphohydrolase (Erwinia tasmaniensis (strain DSM 17950 / CFBP 7177 / CIP 109463 / NCPPB 4357 / Et1/99)).